A 320-amino-acid chain; its full sequence is Ribonuclease Z (320 aa).

The Zn(2+) site is built by His62, His64, Asp66, His67, His139, Asp210, and His268. Asp66 functions as the Proton acceptor in the catalytic mechanism.

Belongs to the RNase Z family. Homodimer. Zn(2+) serves as cofactor.

It carries out the reaction Endonucleolytic cleavage of RNA, removing extra 3' nucleotides from tRNA precursor, generating 3' termini of tRNAs. A 3'-hydroxy group is left at the tRNA terminus and a 5'-phosphoryl group is left at the trailer molecule.. Zinc phosphodiesterase, which displays some tRNA 3'-processing endonuclease activity. Probably involved in tRNA maturation, by removing a 3'-trailer from precursor tRNA. The polypeptide is Ribonuclease Z (Cyanothece sp. (strain PCC 7425 / ATCC 29141)).